Here is a 280-residue protein sequence, read N- to C-terminus: 2,3,4,5-tetrahydropyridine-2,6-dicarboxylate N-succinyltransferase (280 aa).

This sequence belongs to the transferase hexapeptide repeat family.

The protein localises to the cytoplasm. It carries out the reaction (S)-2,3,4,5-tetrahydrodipicolinate + succinyl-CoA + H2O = (S)-2-succinylamino-6-oxoheptanedioate + CoA. Its pathway is amino-acid biosynthesis; L-lysine biosynthesis via DAP pathway; LL-2,6-diaminopimelate from (S)-tetrahydrodipicolinate (succinylase route): step 1/3. In Methylorubrum extorquens (strain PA1) (Methylobacterium extorquens), this protein is 2,3,4,5-tetrahydropyridine-2,6-dicarboxylate N-succinyltransferase.